A 104-amino-acid polypeptide reads, in one-letter code: DNA-directed RNA polymerase subunit omega (104 aa).

This sequence belongs to the RNA polymerase subunit omega family. In terms of assembly, the RNAP catalytic core consists of 2 alpha, 1 beta, 1 beta' and 1 omega subunit. When a sigma factor is associated with the core the holoenzyme is formed, which can initiate transcription.

It catalyses the reaction RNA(n) + a ribonucleoside 5'-triphosphate = RNA(n+1) + diphosphate. Promotes RNA polymerase assembly. Latches the N- and C-terminal regions of the beta' subunit thereby facilitating its interaction with the beta and alpha subunits. The polypeptide is DNA-directed RNA polymerase subunit omega (Streptococcus thermophilus (strain CNRZ 1066)).